The chain runs to 378 residues: Lipid-A-disaccharide synthase (378 aa).

Belongs to the LpxB family.

The catalysed reaction is a lipid X + a UDP-2-N,3-O-bis[(3R)-3-hydroxyacyl]-alpha-D-glucosamine = a lipid A disaccharide + UDP + H(+). It participates in bacterial outer membrane biogenesis; LPS lipid A biosynthesis. Its function is as follows. Condensation of UDP-2,3-diacylglucosamine and 2,3-diacylglucosamine-1-phosphate to form lipid A disaccharide, a precursor of lipid A, a phosphorylated glycolipid that anchors the lipopolysaccharide to the outer membrane of the cell. The sequence is that of Lipid-A-disaccharide synthase from Pseudomonas paraeruginosa (strain DSM 24068 / PA7) (Pseudomonas aeruginosa (strain PA7)).